We begin with the raw amino-acid sequence, 477 residues long: Bifunctional protein HldE (477 aa).

The segment at 1–318 (MKVNLPAFER…ENAVRGRAAT (318 aa)) is ribokinase. 195–198 (NLSE) is a binding site for ATP. D264 is an active-site residue. The tract at residues 344–477 (MTNGVFDILH…IKKIQTESEK (134 aa)) is cytidylyltransferase.

It in the N-terminal section; belongs to the carbohydrate kinase PfkB family. This sequence in the C-terminal section; belongs to the cytidylyltransferase family. In terms of assembly, homodimer.

It carries out the reaction D-glycero-beta-D-manno-heptose 7-phosphate + ATP = D-glycero-beta-D-manno-heptose 1,7-bisphosphate + ADP + H(+). The enzyme catalyses D-glycero-beta-D-manno-heptose 1-phosphate + ATP + H(+) = ADP-D-glycero-beta-D-manno-heptose + diphosphate. It functions in the pathway nucleotide-sugar biosynthesis; ADP-L-glycero-beta-D-manno-heptose biosynthesis; ADP-L-glycero-beta-D-manno-heptose from D-glycero-beta-D-manno-heptose 7-phosphate: step 1/4. The protein operates within nucleotide-sugar biosynthesis; ADP-L-glycero-beta-D-manno-heptose biosynthesis; ADP-L-glycero-beta-D-manno-heptose from D-glycero-beta-D-manno-heptose 7-phosphate: step 3/4. In terms of biological role, catalyzes the phosphorylation of D-glycero-D-manno-heptose 7-phosphate at the C-1 position to selectively form D-glycero-beta-D-manno-heptose-1,7-bisphosphate. Catalyzes the ADP transfer from ATP to D-glycero-beta-D-manno-heptose 1-phosphate, yielding ADP-D-glycero-beta-D-manno-heptose. The chain is Bifunctional protein HldE from Salmonella arizonae (strain ATCC BAA-731 / CDC346-86 / RSK2980).